Here is a 302-residue protein sequence, read N- to C-terminus: Sulfate adenylyltransferase subunit 2 (302 aa).

This sequence belongs to the PAPS reductase family. CysD subfamily. In terms of assembly, heterodimer composed of CysD, the smaller subunit, and CysN.

It carries out the reaction sulfate + ATP + H(+) = adenosine 5'-phosphosulfate + diphosphate. It participates in sulfur metabolism; hydrogen sulfide biosynthesis; sulfite from sulfate: step 1/3. In terms of biological role, with CysN forms the ATP sulfurylase (ATPS) that catalyzes the adenylation of sulfate producing adenosine 5'-phosphosulfate (APS) and diphosphate, the first enzymatic step in sulfur assimilation pathway. APS synthesis involves the formation of a high-energy phosphoric-sulfuric acid anhydride bond driven by GTP hydrolysis by CysN coupled to ATP hydrolysis by CysD. This is Sulfate adenylyltransferase subunit 2 from Aeromonas hydrophila subsp. hydrophila (strain ATCC 7966 / DSM 30187 / BCRC 13018 / CCUG 14551 / JCM 1027 / KCTC 2358 / NCIMB 9240 / NCTC 8049).